The sequence spans 454 residues: tRNA(Ile)-lysidine synthase (454 aa).

Residue 27–32 (SGGSDS) coordinates ATP.

It belongs to the tRNA(Ile)-lysidine synthase family.

It localises to the cytoplasm. The enzyme catalyses cytidine(34) in tRNA(Ile2) + L-lysine + ATP = lysidine(34) in tRNA(Ile2) + AMP + diphosphate + H(+). Functionally, ligates lysine onto the cytidine present at position 34 of the AUA codon-specific tRNA(Ile) that contains the anticodon CAU, in an ATP-dependent manner. Cytidine is converted to lysidine, thus changing the amino acid specificity of the tRNA from methionine to isoleucine. This Mesorhizobium japonicum (strain LMG 29417 / CECT 9101 / MAFF 303099) (Mesorhizobium loti (strain MAFF 303099)) protein is tRNA(Ile)-lysidine synthase.